A 123-amino-acid chain; its full sequence is Thioredoxin domain-containing protein 17 (123 aa).

The 83-residue stretch at 41–123 (SWCPDCVKAE…DLVRMMFTED (83 aa)) folds into the Thioredoxin domain. Residues cysteine 43 and cysteine 46 each act as nucleophile in the active site. A disulfide bond links cysteine 43 and cysteine 46.

It belongs to the thioredoxin family.

The protein localises to the cytoplasm. Disulfide reductase. May participate in various redox reactions through the reversible oxidation of its active center dithiol to a disulfide and catalyze dithiol-disulfide exchange reactions. Has peroxidase activity and may contribute to the elimination of cellular hydrogen peroxide. The protein is Thioredoxin domain-containing protein 17 (txndc17) of Danio rerio (Zebrafish).